A 252-amino-acid chain; its full sequence is Gamma carbonic anhydrase-like 1, mitochondrial (252 aa).

The transit peptide at 1–29 (MATSIARLSRRGVTSNLIRRCFAAEAALA) directs the protein to the mitochondrion. Substrate-binding positions include 99–101 (RGD) and 114–115 (QE). Histidine 120 contacts Zn(2+). 3 residues coordinate substrate: arginine 148, glutamine 160, and tyrosine 227.

This sequence belongs to the gamma-class carbonic anhydrase family. As to quaternary structure, component of the mitochondrial oxidoreductase respiratory chain complex I; element of the extra matrix-exposed domain, which is attached to the membrane arm of this complex. Interacts with GAMMACA2.

It localises to the mitochondrion membrane. Involved in complex I assembly in mitochondria and respiration. The polypeptide is Gamma carbonic anhydrase-like 1, mitochondrial (GAMMACAL1) (Arabidopsis thaliana (Mouse-ear cress)).